The following is a 280-amino-acid chain: Acyl-[acyl-carrier-protein]--UDP-N-acetylglucosamine O-acyltransferase (280 aa).

It belongs to the transferase hexapeptide repeat family. LpxA subfamily. As to quaternary structure, homotrimer.

It is found in the cytoplasm. It catalyses the reaction a (3R)-hydroxyacyl-[ACP] + UDP-N-acetyl-alpha-D-glucosamine = a UDP-3-O-[(3R)-3-hydroxyacyl]-N-acetyl-alpha-D-glucosamine + holo-[ACP]. The protein operates within glycolipid biosynthesis; lipid IV(A) biosynthesis; lipid IV(A) from (3R)-3-hydroxytetradecanoyl-[acyl-carrier-protein] and UDP-N-acetyl-alpha-D-glucosamine: step 1/6. Its function is as follows. Involved in the biosynthesis of lipid A, a phosphorylated glycolipid that anchors the lipopolysaccharide to the outer membrane of the cell. In Chlamydia muridarum (strain MoPn / Nigg), this protein is Acyl-[acyl-carrier-protein]--UDP-N-acetylglucosamine O-acyltransferase.